Here is a 625-residue protein sequence, read N- to C-terminus: Clathrin interactor 1 (625 aa).

The region spanning 16–149 is the ENTH domain; sequence NVVMNYSEIE…QDDDRLREER (134 aa). R29 is a binding site for a 1,2-diacyl-sn-glycero-3-phospho-(1D-myo-inositol-4,5-bisphosphate). The segment at 52 to 54 is interaction with VTI1B; it reads FMY. R67 is a binding site for a 1,2-diacyl-sn-glycero-3-phospho-(1D-myo-inositol-4,5-bisphosphate). Interaction with VTI1B stretches follow at residues 94-96 and 142-153; these read SER and DDRLREERKKAK. A phosphoserine mark is found at S163, S166, S173, S205, S210, S227, S245, and S299. The interval 219–331 is disordered; it reads FRRKDREDSP…SSGDLVDLFD (113 aa). Basic and acidic residues predominate over residues 222 to 239; the sequence is KDREDSPERCSDSDEEKK. Position 308 is a phosphothreonine (T308). Residues 308–323 are compositionally biased toward low complexity; sequence TPQSSVKTSVPSSKSS. S312 carries the post-translational modification Phosphoserine. Residues 340–352 form an interaction with AP1G1, AP1G2 and GGA2 region; that stretch reads SADLFGGFADFGS. Positions 368–380 are interaction with AP1G1 and AP1G2; it reads GNGDFGDWSAFNQ. S624 bears the Phosphoserine mark.

It belongs to the epsin family. Binds clathrin heavy chain and AP-2. Interacts with VTI1B. Interacts with GGA2 (via GAE domain). Interacts with AP1G1 (via GAE domain). Interacts with AP1G2 (via GAE domain). Ubiquitously expressed at low to intermediate levels.

Its subcellular location is the cytoplasm. The protein resides in the perinuclear region. The protein localises to the membrane. It localises to the cytoplasmic vesicle. It is found in the clathrin-coated vesicle. In terms of biological role, binds to membranes enriched in phosphatidylinositol 4,5-bisphosphate (PtdIns(4,5)P2). May have a role in transport via clathrin-coated vesicles from the trans-Golgi network to endosomes. Stimulates clathrin assembly. This is Clathrin interactor 1 (CLINT1) from Homo sapiens (Human).